The primary structure comprises 575 residues: Beta-amylase 1, chloroplastic (575 aa).

A chloroplast-targeting transit peptide spans 1–41 (MALNLSHQLGVLAGTPIKSGEMTDSSLLSISPPSARMMTPK). Ser-55 and Ser-59 each carry phosphoserine. Cys-73 and Cys-511 are joined by a disulfide. Substrate is bound by residues Asp-147, His-187, and Asp-195. The active-site Proton donor is the Glu-279. Substrate is bound by residues Lys-392, His-397, and Thr-439. Catalysis depends on Glu-477, which acts as the Proton acceptor. Substrate is bound by residues 478 to 479 (NA) and Arg-517.

This sequence belongs to the glycosyl hydrolase 14 family. Expressed in leaves, roots, flowers, pollen, and seeds.

The protein localises to the plastid. The protein resides in the chloroplast. The enzyme catalyses Hydrolysis of (1-&gt;4)-alpha-D-glucosidic linkages in polysaccharides so as to remove successive maltose units from the non-reducing ends of the chains.. Its activity is regulated as follows. Redox regulation; active in reducing conditions, inactive in oxidizing conditions. Thioredoxins f1, m1, and y1 mediate the reversible reductive activation of oxidized BAM1. Functionally, beta-amylase activity. Can use p-nitrophenyl maltopentaoside (PNPG5) as substrate only in reduced form. Can play a minor role in the starch degradation and maltose metabolism in chloroplasts during the night. More active on phosphorylated glucan. Interacts directly with starch or other alpha-1,4-glucan. In Arabidopsis thaliana (Mouse-ear cress), this protein is Beta-amylase 1, chloroplastic (BAM1).